The chain runs to 67 residues: ATP synthase subunit c (67 aa).

2 helical membrane passes run 6 to 26 (ILAL…LVAN) and 46 to 66 (IMGV…TFFV).

The protein belongs to the ATPase C chain family. F-type ATPases have 2 components, F(1) - the catalytic core - and F(0) - the membrane proton channel. F(1) has five subunits: alpha(3), beta(3), gamma(1), delta(1), epsilon(1). F(0) has three main subunits: a(1), b(2) and c(10-14). The alpha and beta chains form an alternating ring which encloses part of the gamma chain. F(1) is attached to F(0) by a central stalk formed by the gamma and epsilon chains, while a peripheral stalk is formed by the delta and b chains.

It is found in the cell membrane. Functionally, f(1)F(0) ATP synthase produces ATP from ADP in the presence of a proton or sodium gradient. F-type ATPases consist of two structural domains, F(1) containing the extramembraneous catalytic core and F(0) containing the membrane proton channel, linked together by a central stalk and a peripheral stalk. During catalysis, ATP synthesis in the catalytic domain of F(1) is coupled via a rotary mechanism of the central stalk subunits to proton translocation. Its function is as follows. Key component of the F(0) channel; it plays a direct role in translocation across the membrane. A homomeric c-ring of between 10-14 subunits forms the central stalk rotor element with the F(1) delta and epsilon subunits. The sequence is that of ATP synthase subunit c from Streptococcus mutans serotype c (strain ATCC 700610 / UA159).